Reading from the N-terminus, the 350-residue chain is Histidinol-phosphate aminotransferase 2 (350 aa).

K210 carries the N6-(pyridoxal phosphate)lysine modification.

Belongs to the class-II pyridoxal-phosphate-dependent aminotransferase family. Histidinol-phosphate aminotransferase subfamily. In terms of assembly, homodimer. Requires pyridoxal 5'-phosphate as cofactor.

It carries out the reaction L-histidinol phosphate + 2-oxoglutarate = 3-(imidazol-4-yl)-2-oxopropyl phosphate + L-glutamate. The protein operates within amino-acid biosynthesis; L-histidine biosynthesis; L-histidine from 5-phospho-alpha-D-ribose 1-diphosphate: step 7/9. In Mannheimia succiniciproducens (strain KCTC 0769BP / MBEL55E), this protein is Histidinol-phosphate aminotransferase 2.